Consider the following 588-residue polypeptide: Progranulin (588 aa).

The signal sequence occupies residues 1 to 17 (MWILVSWLALVARLVAG). N-linked (GlcNAc...) asparagine glycosylation is present at Asn-38. 12 disulfide bridges follow: Cys-125/Cys-138, Cys-132/Cys-148, Cys-281/Cys-293, Cys-287/Cys-303, Cys-294/Cys-311, Cys-304/Cys-318, Cys-312/Cys-325, Cys-319/Cys-332, Cys-363/Cys-375, Cys-369/Cys-385, Cys-394/Cys-407, and Cys-401/Cys-413. Asn-372 carries an N-linked (GlcNAc...) asparagine glycan. Asn-525 carries an N-linked (GlcNAc...) asparagine glycan.

It belongs to the granulin family. In terms of assembly, progranulin is secreted as a homodimer. Interacts with SLPI; interaction protects progranulin from proteolysis. Interacts (via region corresponding to granulin-7 peptide) with CTSD; stabilizes CTSD and increases its proteolytic activity. Interacts (via region corresponding to granulin-7 peptide) with SORT1; this interaction mediates endocytosis and lysosome delivery of progranulin; interaction occurs at the neuronal cell surface in a stressed nervous system. Interacts with PSAP; facilitates lysosomal delivery of progranulin from the extracellular space and the biosynthetic pathway. Forms a complex with PSAP and M6PR; PSAP bridges the binding between progranulin and M6PR. Forms a complex with PSAP and SORT1; progranulin bridges the interaction between PSAP and SORT1; facilitates lysosomal targeting of PSAP via SORT1; interaction enhances PSAP uptake in primary cortical neurons. Interacts (via regions corresponding to granulin-2 and granulin-7 peptides) with GBA1; this interaction prevents aggregation of GBA1-SCARB2 complex via interaction with HSPA1A upon stress. Interacts (via region corresponding to granulin-7 peptide) with HSPA1A; mediates recruitment of HSPA1A to GBA1 and prevents GBA1 aggregation in response to stress. Cleaved by ELANE; proteolysis is blocked by SLPI and is concentration- and time-dependent and induces CXCL8/IL-8 production; granulin-3 and granulin-4 are resistant to ELANE. Cleaved by CTSL in lysosome thus regulating the maturation and turnover of progranulin within the lysosome. Ubiquitous; most abundant in the spleen and several tissues of endocrine significance.

Its subcellular location is the secreted. It localises to the lysosome. In terms of biological role, secreted protein that acts as a key regulator of lysosomal function and as a growth factor involved in inflammation, wound healing and cell proliferation. Regulates protein trafficking to lysosomes, and also the activity of lysosomal enzymes. Also facilitates the acidification of lysosomes, causing degradation of mature CTSD by CTSB. In addition, functions as a wound-related growth factor that acts directly on dermal fibroblasts and endothelial cells to promote division, migration and the formation of capillary-like tubule structures. Also promotes epithelial cell proliferation by blocking TNF-mediated neutrophil activation preventing release of oxidants and proteases. Moreover, modulates inflammation in neurons by preserving neurons survival, axonal outgrowth and neuronal integrity. Inhibits epithelial cell proliferation and induces epithelial cells to secrete IL-8. Its function is as follows. Stabilizes CTSD through interaction with CTSD leading to maintain its aspartic-type peptidase activity. The chain is Progranulin (Grn) from Rattus norvegicus (Rat).